The primary structure comprises 256 residues: Acetoacetate decarboxylase 3 (256 aa).

Lys-110 acts as the Schiff-base intermediate with acetoacetate in catalysis.

It belongs to the ADC family.

The enzyme catalyses acetoacetate + H(+) = acetone + CO2. Catalyzes the conversion of acetoacetate to acetone and carbon dioxide. This chain is Acetoacetate decarboxylase 3, found in Mesorhizobium japonicum (strain LMG 29417 / CECT 9101 / MAFF 303099) (Mesorhizobium loti (strain MAFF 303099)).